The primary structure comprises 209 residues: Dephospho-CoA kinase (209 aa).

The DPCK domain maps to R13–N209. A21–T26 serves as a coordination point for ATP.

This sequence belongs to the CoaE family.

The protein resides in the cytoplasm. The catalysed reaction is 3'-dephospho-CoA + ATP = ADP + CoA + H(+). It participates in cofactor biosynthesis; coenzyme A biosynthesis; CoA from (R)-pantothenate: step 5/5. Functionally, catalyzes the phosphorylation of the 3'-hydroxyl group of dephosphocoenzyme A to form coenzyme A. In Synechococcus elongatus (strain ATCC 33912 / PCC 7942 / FACHB-805) (Anacystis nidulans R2), this protein is Dephospho-CoA kinase.